Reading from the N-terminus, the 87-residue chain is Small ribosomal subunit protein uS17 (87 aa).

This sequence belongs to the universal ribosomal protein uS17 family. As to quaternary structure, part of the 30S ribosomal subunit.

Its function is as follows. One of the primary rRNA binding proteins, it binds specifically to the 5'-end of 16S ribosomal RNA. This Bacillus pumilus (strain SAFR-032) protein is Small ribosomal subunit protein uS17.